A 284-amino-acid chain; its full sequence is Nucleoid occlusion protein (284 aa).

The segment at residues 143 to 162 (EALAQRVGKSQSAIANKMRL) is a DNA-binding region (H-T-H motif).

This sequence belongs to the ParB family.

It is found in the cytoplasm. It localises to the nucleoid. Functionally, effects nucleoid occlusion by binding relatively nonspecifically to DNA and preventing the assembly of the division machinery in the vicinity of the nucleoid, especially under conditions that disturb the cell cycle. It helps to coordinate cell division and chromosome segregation by preventing the formation of the Z ring through the nucleoid, which would cause chromosome breakage. This Listeria monocytogenes serovar 1/2a (strain ATCC BAA-679 / EGD-e) protein is Nucleoid occlusion protein.